The chain runs to 411 residues: MATTATMATSGSARKRLLKEEDMTKVEFETSEEVDVTPTFDTMGLREDLLRGIYAYGFEKPSAIQQRAIKQIIKGRDVIAQSQSGTGKTATFSISVLQCLDIQVRETQALILAPTRELAVQIQKGLLALGDYMNVQCHACIGGTNVGEDIRKLDYGQHVVAGTPGRVFDMIRRRSLRTRAIKMLVLDEADEMLNKGFKEQIYDVYRYLPPATQVVLISATLPHEILEMTNKFMTDPIRILVKRDELTLEGIKQFFVAVEREEWKFDTLCDLYDTLTITQAVIFCNTKRKVDWLTEKMREANFTVSSMHGDMPQKERESIMKEFRSGASRVLISTDVWARGLDVPQVSLIINYDLPNNRELYIHRIGRSGRYGRKGVAINFVKNDDIRILRDIEQYYSTQIDEMPMNVADLI.

Residue methionine 1 is modified to N-acetylmethionine. Residue alanine 2 is modified to N-acetylalanine; in Eukaryotic initiation factor 4A-III, N-terminally processed. Phosphoserine occurs at positions 10 and 12. A Glycyl lysine isopeptide (Lys-Gly) (interchain with G-Cter in SUMO2) cross-link involves residue lysine 19. A Q motif motif is present at residues 38-66; sequence PTFDTMGLREDLLRGIYAYGFEKPSAIQQ. ATP contacts are provided by residues lysine 60, glutamine 65, and 85–90; that span reads GTGKTA. The Helicase ATP-binding domain occupies 69–239; sequence IKQIIKGRDV…NKFMTDPIRI (171 aa). At lysine 124 the chain carries N6-acetyllysine. Lysine 152 is covalently cross-linked (Glycyl lysine isopeptide (Lys-Gly) (interchain with G-Cter in SUMO2)). Threonine 163 carries the phosphothreonine modification. The short motif at 187–190 is the DEAD box element; sequence DEAD. N6-acetyllysine is present on residues lysine 198 and lysine 296. The Helicase C-terminal domain maps to 250–411; that stretch reads GIKQFFVAVE…EMPMNVADLI (162 aa). Lysine 314 is covalently cross-linked (Glycyl lysine isopeptide (Lys-Gly) (interchain with G-Cter in SUMO2)). Residue lysine 321 is modified to N6-acetyllysine. ATP is bound by residues aspartate 342 and 367–371; that span reads RSGRY. Glycyl lysine isopeptide (Lys-Gly) (interchain with G-Cter in SUMO2) cross-links involve residues lysine 374 and lysine 382.

It belongs to the DEAD box helicase family. eIF4A subfamily. Identified in the spliceosome C complex. Core component of the mRNA splicing-dependent exon junction complex (EJC); the core complex contains CASC3, EIF4A3, MAGOH or MAGOHB, and RBM8A. Interacts with CASC3, MAGOH, NXF1, RBM8A and ALYREF/THOC4. Component of the ALYREF/THOC4-EJC-RNA complex; in the complex interacts with MAGOH, RBM8A and THOC4 (via the WXHD motif); these interactions are likely specific to RNA-bound EJC. May interact with NOM1. Interacts with POLDIP3. Interacts with CWC22 and PRPF19 in an RNA-independent manner. Direct interaction with CWC22 is mediated by the helicase C-terminal domain. Full interaction with CWC22 occurs only when EIF4A3 is not part of the EJC and prevents EIF4A3 binding to RNA. Identified in a complex composed of the EJC core, UPF3B and UPF2. The EJC core can also interact with UPF3A (in vitro). Interacts with NCBP3. Interacts with NRDE2. Interacts with DHX34; the interaction is RNA-independent. As to expression, ubiquitously expressed.

It is found in the nucleus. It localises to the nucleus speckle. The protein resides in the cytoplasm. It carries out the reaction ATP + H2O = ADP + phosphate + H(+). Its activity is regulated as follows. The ATPase activity is increased some 4-fold in the presence of RNA. Its function is as follows. ATP-dependent RNA helicase. Involved in pre-mRNA splicing as component of the spliceosome. Core component of the splicing-dependent multiprotein exon junction complex (EJC) deposited at splice junctions on mRNAs. The EJC is a dynamic structure consisting of core proteins and several peripheral nuclear and cytoplasmic associated factors that join the complex only transiently either during EJC assembly or during subsequent mRNA metabolism. The EJC marks the position of the exon-exon junction in the mature mRNA for the gene expression machinery and the core components remain bound to spliced mRNAs throughout all stages of mRNA metabolism thereby influencing downstream processes including nuclear mRNA export, subcellular mRNA localization, translation efficiency and nonsense-mediated mRNA decay (NMD). Its RNA-dependent ATPase and RNA-helicase activities are induced by CASC3, but abolished in presence of the MAGOH-RBM8A heterodimer, thereby trapping the ATP-bound EJC core onto spliced mRNA in a stable conformation. The inhibition of ATPase activity by the MAGOH-RBM8A heterodimer increases the RNA-binding affinity of the EJC. Involved in translational enhancement of spliced mRNAs after formation of the 80S ribosome complex. Binds spliced mRNA in sequence-independent manner, 20-24 nucleotides upstream of mRNA exon-exon junctions. Shows higher affinity for single-stranded RNA in an ATP-bound core EJC complex than after the ATP is hydrolyzed. Involved in the splicing modulation of BCL2L1/Bcl-X (and probably other apoptotic genes); specifically inhibits formation of proapoptotic isoforms such as Bcl-X(S); the function is different from the established EJC assembly. Involved in craniofacial development. The polypeptide is Eukaryotic initiation factor 4A-III (EIF4A3) (Homo sapiens (Human)).